The following is a 129-amino-acid chain: Small ribosomal subunit protein uS9 (129 aa).

This sequence belongs to the universal ribosomal protein uS9 family.

This is Small ribosomal subunit protein uS9 (rpsI) from Helicobacter pylori (strain J99 / ATCC 700824) (Campylobacter pylori J99).